The following is a 402-amino-acid chain: Multidrug resistance protein MdtH (402 aa).

Topologically, residues 1-12 (MSRVSQARNLGK) are cytoplasmic. A helical membrane pass occupies residues 13–33 (YFLLIDNMLVVLGFFVVFPLI). The Periplasmic portion of the chain corresponds to 34–98 (SIRFVDQMGW…GFATMGIAHE (65 aa)). Residues 99–116 (PWLLWFSCFLSGLGGTLF) traverse the membrane as a helical segment. Residues 117–138 (DPPRSALVVKLIRPEQRGRFFS) lie on the Cytoplasmic side of the membrane. A helical membrane pass occupies residues 139–159 (LLMMQDSAGAVIGALLGSWLL). Over 160–164 (QYDFR) the chain is Periplasmic. A helical membrane pass occupies residues 165-185 (LVCATGAILFILCALFNAWLL). Residues 186 to 213 (PAWKLSTVRTPVREGMRRVMSDKRFVTY) lie on the Cytoplasmic side of the membrane. A helical membrane pass occupies residues 214 to 234 (VLTLAGYYMLAVQVMLMLPIM). At 235–243 (VNDIAGSPA) the chain is on the periplasmic side. Residues 244-264 (AVKWMYAIEACLSLTLLYPIA) form a helical membrane-spanning segment. Over 265 to 276 (RWSEKRFRLEHR) the chain is Cytoplasmic. The helical transmembrane segment at 277–297 (LMAGLLVMSLSMIPIGMVGNL) threads the bilayer. Residues 298 to 299 (QQ) are Periplasmic-facing. The chain crosses the membrane as a helical span at residues 300-320 (LFTLICAFYIGSVIAEPARET). Over 321-339 (LSASLADARARGSYMGFSR) the chain is Cytoplasmic. Residues 340–360 (LGLAIGGAIGYIGGGWLFDMG) traverse the membrane as a helical segment. Residues 361-367 (KALTQPE) lie on the Periplasmic side of the membrane. The helical transmembrane segment at 368–388 (LPWMMLGIIGFITFLALGWQF) threads the bilayer. The Cytoplasmic portion of the chain corresponds to 389 to 402 (SHKRTPRRMLEPGA).

It belongs to the major facilitator superfamily. DHA1 family. MdtH (TC 2.A.1.2.21) subfamily.

The protein localises to the cell inner membrane. This chain is Multidrug resistance protein MdtH, found in Salmonella paratyphi B (strain ATCC BAA-1250 / SPB7).